The following is a 215-amino-acid chain: 24 kDa Ras-like protein (215 aa).

17–24 (GGGGVGKS) contributes to the GTP binding site. The Effector region motif lies at 39 to 47 (YDPTIEDSY). GTP contacts are provided by residues 64–68 (DTAGQ) and 123–126 (NKCD). Residues 179–199 (QTGRPAIAAGGGGPAGSYTQD) are disordered. Cysteine methyl ester is present on cysteine 212. Residue cysteine 212 is the site of S-farnesyl cysteine attachment. A propeptide spans 213–215 (VIA) (removed in mature form).

Belongs to the small GTPase superfamily. Ras family.

It is found in the cell membrane. The catalysed reaction is GTP + H2O = GDP + phosphate + H(+). In terms of biological role, ras proteins bind GDP/GTP and possess intrinsic GTPase activity. The chain is 24 kDa Ras-like protein (CC-RAS) from Coprinopsis cinerea (strain Okayama-7 / 130 / ATCC MYA-4618 / FGSC 9003) (Inky cap fungus).